The chain runs to 189 residues: Elongation factor P (189 aa).

Belongs to the elongation factor P family.

The protein resides in the cytoplasm. Its pathway is protein biosynthesis; polypeptide chain elongation. Functionally, involved in peptide bond synthesis. Stimulates efficient translation and peptide-bond synthesis on native or reconstituted 70S ribosomes in vitro. Probably functions indirectly by altering the affinity of the ribosome for aminoacyl-tRNA, thus increasing their reactivity as acceptors for peptidyl transferase. This is Elongation factor P from Rhizobium radiobacter (Agrobacterium tumefaciens).